We begin with the raw amino-acid sequence, 147 residues long: Cytochrome b-c1 complex subunit 6, mitochondrial (147 aa).

Residues 25-89 (AEDDDNEQHE…DLREHFKNTE (65 aa)) are disordered. A compositionally biased stretch (acidic residues) spans 41–78 (EEKEEENGDEDEDEDEDEDDDDDDDEDEEEEEEVTDQL). The span at 79–89 (EDLREHFKNTE) shows a compositional bias: basic and acidic residues. C101 and C123 are joined by a disulfide.

This sequence belongs to the UQCRH/QCR6 family. Component of the ubiquinol-cytochrome c oxidoreductase (cytochrome b-c1 complex, complex III, CIII), a multisubunit enzyme composed of 10 subunits. The complex is composed of 3 respiratory subunits cytochrome b (COB), cytochrome c1 (CYT1) and Rieske protein (RIP1), 2 core protein subunits COR1 and QCR2, and 5 low-molecular weight protein subunits QCR6, QCR7, QCR8, QCR9 and QCR10. The complex exists as an obligatory dimer and forms supercomplexes (SCs) in the inner mitochondrial membrane with a monomer or a dimer of cytochrome c oxidase (complex IV, CIV), resulting in 2 different assemblies (supercomplexes III(2)IV and III(2)IV(2)). QCR6 interacts with COX5A at the CIII-CIV interface.

The protein resides in the mitochondrion inner membrane. Its function is as follows. Component of the ubiquinol-cytochrome c oxidoreductase, a multisubunit transmembrane complex that is part of the mitochondrial electron transport chain which drives oxidative phosphorylation. The respiratory chain contains 3 multisubunit complexes succinate dehydrogenase (complex II, CII), ubiquinol-cytochrome c oxidoreductase (cytochrome b-c1 complex, complex III, CIII) and cytochrome c oxidase (complex IV, CIV), that cooperate to transfer electrons derived from NADH and succinate to molecular oxygen, creating an electrochemical gradient over the inner membrane that drives transmembrane transport and the ATP synthase. The cytochrome b-c1 complex catalyzes electron transfer from ubiquinol to cytochrome c, linking this redox reaction to translocation of protons across the mitochondrial inner membrane, with protons being carried across the membrane as hydrogens on the quinol. In the process called Q cycle, 2 protons are consumed from the matrix, 4 protons are released into the intermembrane space and 2 electrons are passed to cytochrome c. The polypeptide is Cytochrome b-c1 complex subunit 6, mitochondrial (QCR6) (Saccharomyces cerevisiae (strain ATCC 204508 / S288c) (Baker's yeast)).